A 442-amino-acid polypeptide reads, in one-letter code: Ribosome biogenesis protein NOP53 (442 aa).

Positions Lys242–Val264 are disordered.

This sequence belongs to the NOP53 family.

The protein localises to the nucleus. The protein resides in the nucleolus. It localises to the nucleoplasm. Its function is as follows. May play a role in ribosome biogenesis. In Arabidopsis thaliana (Mouse-ear cress), this protein is Ribosome biogenesis protein NOP53.